We begin with the raw amino-acid sequence, 31 residues long: Cytochrome b6-f complex subunit 6 (31 aa).

A helical membrane pass occupies residues 4 to 26 (LTSYFGFLLAALTITSALFIGLS).

The protein belongs to the PetL family. In terms of assembly, the 4 large subunits of the cytochrome b6-f complex are cytochrome b6, subunit IV (17 kDa polypeptide, PetD), cytochrome f and the Rieske protein, while the 4 small subunits are PetG, PetL, PetM and PetN. The complex functions as a dimer.

Its subcellular location is the plastid. The protein resides in the chloroplast thylakoid membrane. Component of the cytochrome b6-f complex, which mediates electron transfer between photosystem II (PSII) and photosystem I (PSI), cyclic electron flow around PSI, and state transitions. PetL is important for photoautotrophic growth as well as for electron transfer efficiency and stability of the cytochrome b6-f complex. This is Cytochrome b6-f complex subunit 6 from Aethionema cordifolium (Lebanon stonecress).